We begin with the raw amino-acid sequence, 487 residues long: Variant surface glycoprotein WRATAT B (487 aa).

The first 19 residues, 1-19 (MWIILALLTLAGSRVAHGA), serve as a signal peptide directing secretion. N-linked (GlcNAc...) asparagine glycosylation is found at asparagine 71, asparagine 84, asparagine 418, and asparagine 465. The segment at 443-468 (KPKAGTEAATTGPGERDAGATANTTG) is disordered. Serine 470 is lipidated: GPI-anchor amidated serine. Residues 471–487 (NSFVIKTSPLLFAFLLF) constitute a propeptide, removed in mature form.

The protein resides in the cell membrane. In terms of biological role, VSG forms a coat on the surface of the parasite. The trypanosome evades the immune response of the host by expressing a series of antigenically distinct VSGs from an estimated 1000 VSG genes. The protein is Variant surface glycoprotein WRATAT B of Trypanosoma brucei rhodesiense.